Consider the following 530-residue polypeptide: MGARRWLVSGVGYRLEESLEYRTLVPEALSIWRMAGANRMLFDCFDVDSKAARRSVAILSSCLRIECWGRDVVLRALNSNGRALLAPLSEDCPAQVTCLRDGDTLHWRFPQEESHADEWRRLHGLSSLEALRRVLGTLGDAEGPVLLGGLFSFDLAEQFEPLPAPAEPARHCPDYLFLVPELLLDIDHLARRTSLQAFVHDPAGHDRLAASLRQCADEFHGAVEEASESPVAGVRAGNYQVDLDDASFARQVERLQAHVRAGDVFQIVPSRSFSMPCADPWRAYRQLCLRNPSPYRFFLDAGDFCLFGASPESALKYDAESREVELYPIAGTRPRGRDARGAIDAELDNRLEAELRLDAKEIAEHMMLVDLARNDLARVCRSGTRQVRDMLKVDRYSHVMHLVSRVAGELHGELDALHAYRACLNMGTLVGAPKVRAMQLLRQYEDGYRGSYGGAIGILDSAGNLDTSIVIRSAEVREGIARVRAGAGVVLDSDPRLEAEETRNKALAVLTAVAAAERERGERDAHHAVG.

Residue 331–332 (GT) coordinates substrate. Residue E364 coordinates Mg(2+). Residues Y452, R472, 486 to 488 (GAG), and G488 each bind substrate. Residue E501 coordinates Mg(2+).

It belongs to the anthranilate synthase component I family. Heterotetramer consisting of two non-identical subunits: a beta subunit (PhnB) and a large alpha subunit (PhnA). Mg(2+) is required as a cofactor.

The enzyme catalyses chorismate + L-glutamine = anthranilate + pyruvate + L-glutamate + H(+). It participates in secondary metabolite biosynthesis; pyocyanine biosynthesis. In terms of biological role, part of a heterotetrameric complex that catalyzes the two-step biosynthesis of anthranilate, a precursor for Pseudomonas quinolone signal (2-heptyl-3-hydroxy-4-quinolone; PQS) production which is required to induce the genes for the biosynthesis of the virulence factor pyocyanine (PCN), a characteristic blue-green phenazine pigment produced by P.aeruginosa. In the first step, the glutamine-binding beta subunit (PhnB) of anthranilate synthase (AS) provides the glutamine amidotransferase activity which generates ammonia as a substrate that, along with chorismate, is used in the second step, catalyzed by the large alpha subunit of AS (PhnA) to produce anthranilate. This chain is Anthranilate synthase component 1, pyocyanine specific, found in Pseudomonas aeruginosa (strain ATCC 15692 / DSM 22644 / CIP 104116 / JCM 14847 / LMG 12228 / 1C / PRS 101 / PAO1).